The primary structure comprises 352 residues: Photosystem II D2 protein (352 aa).

A helical membrane pass occupies residues 40 to 60; the sequence is CAFLSIGGWLTGTTFVTSWYT. A chlorophyll a-binding site is contributed by H117. The helical transmembrane segment at 124-140 threads the bilayer; the sequence is GFCLRQIEIARLVGIRP. Q129 and N142 together coordinate pheophytin a. Residues 152–165 form a helical membrane-spanning segment; it reads VFVSVFLMYPLGQS. H197 is a chlorophyll a binding site. Residues 207–227 form a helical membrane-spanning segment; that stretch reads GALLCAIHGATVENTLFQDGE. Positions 214 and 261 each coordinate a plastoquinone. Residue H214 coordinates Fe cation. Fe cation is bound at residue H268. A helical transmembrane segment spans residues 278 to 294; the sequence is GLWMSSIGIVGLAFNLR.

The protein belongs to the reaction center PufL/M/PsbA/D family. As to quaternary structure, PSII is composed of 1 copy each of membrane proteins PsbA, PsbB, PsbC, PsbD, PsbE, PsbF, PsbH, PsbI, PsbJ, PsbK, PsbL, PsbM, PsbT, PsbX, PsbY, PsbZ, Psb30/Ycf12, peripheral proteins PsbO, CyanoQ (PsbQ), PsbU, PsbV and a large number of cofactors. It forms dimeric complexes. The D1/D2 heterodimer binds P680, chlorophylls that are the primary electron donor of PSII, and subsequent electron acceptors. It shares a non-heme iron and each subunit binds pheophytin, quinone, additional chlorophylls, carotenoids and lipids. There is also a Cl(-1) ion associated with D1 and D2, which is required for oxygen evolution. The PSII complex binds additional chlorophylls, carotenoids and specific lipids. is required as a cofactor.

The protein localises to the cellular thylakoid membrane. It carries out the reaction 2 a plastoquinone + 4 hnu + 2 H2O = 2 a plastoquinol + O2. Photosystem II (PSII) is a light-driven water:plastoquinone oxidoreductase that uses light energy to abstract electrons from H(2)O, generating O(2) and a proton gradient subsequently used for ATP formation. It consists of a core antenna complex that captures photons, and an electron transfer chain that converts photonic excitation into a charge separation. The D1/D2 (PsbA/PsbD) reaction center heterodimer binds P680, the primary electron donor of PSII as well as several subsequent electron acceptors. D2 is needed for assembly of a stable PSII complex. This chain is Photosystem II D2 protein, found in Trichodesmium erythraeum (strain IMS101).